A 404-amino-acid chain; its full sequence is Type II restriction enzyme EcoRII (404 aa).

Tyr-308 is a catalytic residue.

In terms of assembly, homodimer. It depends on Mg(2+) as a cofactor.

The enzyme catalyses Endonucleolytic cleavage of DNA to give specific double-stranded fragments with terminal 5'-phosphates.. Its function is as follows. An E and P subtype restriction enzyme that recognizes the double-stranded sequence 5'-CCWGG-3' and cleaves before C-1. In Escherichia coli, this protein is Type II restriction enzyme EcoRII (ecoRIIR).